We begin with the raw amino-acid sequence, 639 residues long: MLDFFTIFSKGGLVLWCFQGVSDSCTGPVNALIRSVLLQERGGNNSFTHEALTLKYKLDNQFELVFVVGFQKILTLTYVDKLIDDVHRLFRDKYRTEIQQQSALSLLNGTFDFQNDFLRLLREAEESSKIRAPTTMKKFEDSEKAKKPVRSMIETRGEKPKEKAKNNKKNKGAKKEGSDGPLATSKAAPAEKSGLPVGPENGEELSKEEQIRRKREEFIQKHGRGMEKSSKSSKSDAPKEKGKKAPRVWALGGSANKEVLDYSTPTTNGAPEAAPPEDINLIRGTGPGRQLQDLDCSSSDDEGAAQNSTKPSATKGTLGGMFGMLKGLVGSKSLTREDMESVLDKMRDHLIAKNVAADIAVQLCESVANKLEGKVMGTFSTVTSTVKQALQESLVQILQPQRRVDMLRDIMDAQRHQRPYVVTFCGVNGVGKSTNLAKISFWLLENGFSVLIAACDTFRAGAVEQLRTHTRRLSALHPPEKHGGRTMVQLFEKGYGKDAAGIAMEAIAFARNQGFDVVLVDTAGRMQDNAPLMTALAKLITVNTPDLVLFVGEALVGNEAVDQLVKFNRALADHSMAQTPRLIDGIVLTKFDTIDDKVGAAISMTYITSKPIVFVGTGQTYCDLRSLNAKAVVAALMKA.

The interval 132–317 (APTTMKKFED…STKPSATKGT (186 aa)) is disordered. Composition is skewed to basic and acidic residues over residues 137–146 (KKFEDSEKAK) and 153–165 (IETRGEKPKEKAK). Serine 178 carries the phosphoserine modification. Positions 204 to 240 (ELSKEEQIRRKREEFIQKHGRGMEKSSKSSKSDAPKE) are enriched in basic and acidic residues. The residue at position 285 (threonine 285) is a Phosphothreonine. Phosphoserine is present on residues serine 297, serine 298, and serine 299. The segment covering 305 to 315 (AQNSTKPSATK) has biased composition (polar residues). An NG domain region spans residues 420–637 (YVVTFCGVNG…NAKAVVAALM (218 aa)). 426-433 (GVNGVGKS) lines the GTP pocket. Serine 474 carries the post-translational modification Phosphoserine. A GTP-binding site is contributed by 521–525 (DTAGR). At threonine 579 the chain carries Phosphothreonine. Position 589–592 (589–592 (TKFD)) interacts with GTP.

This sequence belongs to the GTP-binding SRP family. Heterodimer with SRPRB. Interacts with the signal recognition particle (SRP) complex subunit SRP54.

Its subcellular location is the endoplasmic reticulum membrane. Its function is as follows. Component of the SRP (signal recognition particle) receptor. Ensures, in conjunction with the signal recognition particle, the correct targeting of the nascent secretory proteins to the endoplasmic reticulum membrane system. Forms a guanosine 5'-triphosphate (GTP)-dependent complex with the SRP subunit SRP54. SRP receptor compaction and GTPase rearrangement drive SRP-mediated cotranslational protein translocation into the ER. In Bos taurus (Bovine), this protein is Signal recognition particle receptor subunit alpha.